The chain runs to 312 residues: HPr kinase/phosphorylase (312 aa).

Catalysis depends on residues His139 and Lys160. An ATP-binding site is contributed by 154–161; it reads GSSGVGKS. Ser161 contacts Mg(2+). The active-site Proton acceptor; for phosphorylation activity. Proton donor; for dephosphorylation activity is the Asp178. The important for the catalytic mechanism of both phosphorylation and dephosphorylation stretch occupies residues 202–211; the sequence is LEIRGLGIIN. Glu203 is a binding site for Mg(2+). Arg244 is a catalytic residue. Positions 265-270 are important for the catalytic mechanism of dephosphorylation; the sequence is PVRPGR.

This sequence belongs to the HPrK/P family. As to quaternary structure, homohexamer. Mg(2+) is required as a cofactor.

It catalyses the reaction [HPr protein]-L-serine + ATP = [HPr protein]-O-phospho-L-serine + ADP + H(+). It carries out the reaction [HPr protein]-O-phospho-L-serine + phosphate + H(+) = [HPr protein]-L-serine + diphosphate. Catalyzes the ATP- as well as the pyrophosphate-dependent phosphorylation of a specific serine residue in HPr, a phosphocarrier protein of the phosphoenolpyruvate-dependent sugar phosphotransferase system (PTS). HprK/P also catalyzes the pyrophosphate-producing, inorganic phosphate-dependent dephosphorylation (phosphorolysis) of seryl-phosphorylated HPr (P-Ser-HPr). The two antagonistic activities of HprK/P are regulated by several intracellular metabolites, which change their concentration in response to the absence or presence of rapidly metabolisable carbon sources (glucose, fructose, etc.) in the growth medium. Therefore, by controlling the phosphorylation state of HPr, HPrK/P is a sensor enzyme that plays a major role in the regulation of carbon metabolism and sugar transport: it mediates carbon catabolite repression (CCR), and regulates PTS-catalyzed carbohydrate uptake and inducer exclusion. The protein is HPr kinase/phosphorylase of Listeria innocua serovar 6a (strain ATCC BAA-680 / CLIP 11262).